Reading from the N-terminus, the 251-residue chain is Triosephosphate isomerase (251 aa).

12 to 14 (NWK) is a binding site for substrate. The active-site Electrophile is the His98. The Proton acceptor role is filled by Glu168. Residues Gly174, Ser213, and 234–235 (GG) contribute to the substrate site.

It belongs to the triosephosphate isomerase family. As to quaternary structure, homodimer.

It is found in the cytoplasm. It carries out the reaction D-glyceraldehyde 3-phosphate = dihydroxyacetone phosphate. It participates in carbohydrate biosynthesis; gluconeogenesis. Its pathway is carbohydrate degradation; glycolysis; D-glyceraldehyde 3-phosphate from glycerone phosphate: step 1/1. Its function is as follows. Involved in the gluconeogenesis. Catalyzes stereospecifically the conversion of dihydroxyacetone phosphate (DHAP) to D-glyceraldehyde-3-phosphate (G3P). This Afipia carboxidovorans (strain ATCC 49405 / DSM 1227 / KCTC 32145 / OM5) (Oligotropha carboxidovorans) protein is Triosephosphate isomerase.